The following is a 404-amino-acid chain: Rhomboid-related protein 3 (404 aa).

2 consecutive EF-hand domains span residues alanine 34–lysine 69 and leucine 70–asparagine 105. Helical transmembrane passes span tryptophan 164–leucine 184, isoleucine 218–glycine 238, isoleucine 250–methionine 270, valine 274–methionine 294, phenylalanine 303–leucine 325, proline 338–leucine 358, and tryptophan 371–phenylalanine 391. Catalysis depends on serine 278, which acts as the Nucleophile. The active site involves histidine 343.

Belongs to the peptidase S54 family.

Its subcellular location is the membrane. It catalyses the reaction Cleaves type-1 transmembrane domains using a catalytic dyad composed of serine and histidine that are contributed by different transmembrane domains.. Functionally, may be involved in regulated intramembrane proteolysis and the subsequent release of functional polypeptides from their membrane anchors. The chain is Rhomboid-related protein 3 (RHBDL3) from Homo sapiens (Human).